A 303-amino-acid polypeptide reads, in one-letter code: MQKFDTKTFQGLILTLQDYWARQGCTIIQPLDMEVGAGTSHPMTCLRALGPEPTAVAYVQPSRRPTDGRYGENPNRLQHYYQFQVIIKPSPDNIQELYLGSLKELGMDPTIHDIRFVEDNWENPTLGAWGLGWEVWLNGMEVTQFTYFQQVGGLECKPVTGEITYGLERLAMYIQGVDSVYDLVWSDGPLGKTTYGDVFHQNEVEQSTYNFEYADVDFLFTCFEQYEKEAQSLLALEKPLPLPAYERILKAAHSFNLLDARKAISVTERQRYILRIRTLTKAVAEAYYASREALGFPMCNNKK.

This sequence belongs to the class-II aminoacyl-tRNA synthetase family. In terms of assembly, tetramer of two alpha and two beta subunits.

The protein resides in the cytoplasm. It catalyses the reaction tRNA(Gly) + glycine + ATP = glycyl-tRNA(Gly) + AMP + diphosphate. In Erwinia tasmaniensis (strain DSM 17950 / CFBP 7177 / CIP 109463 / NCPPB 4357 / Et1/99), this protein is Glycine--tRNA ligase alpha subunit.